Consider the following 488-residue polypeptide: ATP synthase subunit beta (488 aa).

164-171 (GGAGVGKT) lines the ATP pocket.

The protein belongs to the ATPase alpha/beta chains family. In terms of assembly, F-type ATPases have 2 components, CF(1) - the catalytic core - and CF(0) - the membrane proton channel. CF(1) has five subunits: alpha(3), beta(3), gamma(1), delta(1), epsilon(1). CF(0) has four main subunits: a(1), b(1), b'(1) and c(9-12).

It localises to the cellular thylakoid membrane. It carries out the reaction ATP + H2O + 4 H(+)(in) = ADP + phosphate + 5 H(+)(out). Produces ATP from ADP in the presence of a proton gradient across the membrane. The catalytic sites are hosted primarily by the beta subunits. The chain is ATP synthase subunit beta from Prochlorococcus marinus (strain SARG / CCMP1375 / SS120).